We begin with the raw amino-acid sequence, 141 residues long: NADH dehydrogenase [ubiquinone] 1 alpha subcomplex subunit 11 (141 aa).

Position 2 is an N-acetylalanine (Ala2). Transmembrane regions (helical) follow at residues Lys21 to Leu43 and Gln58 to Val80.

Belongs to the complex I NDUFA11 subunit family. Complex I is composed of 45 different subunits.

The protein resides in the mitochondrion inner membrane. Its function is as follows. Accessory subunit of the mitochondrial membrane respiratory chain NADH dehydrogenase (Complex I), that is believed not to be involved in catalysis. Complex I functions in the transfer of electrons from NADH to the respiratory chain. The immediate electron acceptor for the enzyme is believed to be ubiquinone. The chain is NADH dehydrogenase [ubiquinone] 1 alpha subcomplex subunit 11 (NDUFA11) from Homo sapiens (Human).